The following is a 719-amino-acid chain: Glycine--tRNA ligase beta subunit (719 aa).

The segment at 65 to 84 is disordered; that stretch reads PDREEEIKGPPAKAAFKDGK.

The protein belongs to the class-II aminoacyl-tRNA synthetase family. As to quaternary structure, tetramer of two alpha and two beta subunits.

Its subcellular location is the cytoplasm. It catalyses the reaction tRNA(Gly) + glycine + ATP = glycyl-tRNA(Gly) + AMP + diphosphate. The sequence is that of Glycine--tRNA ligase beta subunit from Trichodesmium erythraeum (strain IMS101).